We begin with the raw amino-acid sequence, 216 residues long: Germin-like protein 1-1 (216 aa).

A signal peptide spans 1–24 (MARVQLWVAAACAVVLALAAPSLA). Cys-34 and Cys-49 are oxidised to a cystine. Asn-52 and Asn-76 each carry an N-linked (GlcNAc...) asparagine glycan. The region spanning 61-209 (AGLKNPGNTN…AFRVDVPQVD (149 aa)) is the Cupin type-1 domain. Mn(2+)-binding residues include His-109, His-111, Glu-116, and His-155.

Belongs to the germin family. Oligomer (believed to be a pentamer but probably hexamer).

It localises to the secreted. Its subcellular location is the extracellular space. The protein resides in the apoplast. Its function is as follows. May play a role in plant defense. Probably has no oxalate oxidase activity even if the active site is conserved. The polypeptide is Germin-like protein 1-1 (GER4) (Oryza sativa subsp. japonica (Rice)).